A 507-amino-acid chain; its full sequence is Histidine ammonia-lyase (507 aa).

Positions 141 to 143 form a cross-link, 5-imidazolinone (Ala-Gly); sequence ASG. 2,3-didehydroalanine (Ser) is present on Ser-142.

It belongs to the PAL/histidase family. Contains an active site 4-methylidene-imidazol-5-one (MIO), which is formed autocatalytically by cyclization and dehydration of residues Ala-Ser-Gly.

Its subcellular location is the cytoplasm. It catalyses the reaction L-histidine = trans-urocanate + NH4(+). It functions in the pathway amino-acid degradation; L-histidine degradation into L-glutamate; N-formimidoyl-L-glutamate from L-histidine: step 1/3. The protein is Histidine ammonia-lyase of Burkholderia lata (strain ATCC 17760 / DSM 23089 / LMG 22485 / NCIMB 9086 / R18194 / 383).